The sequence spans 148 residues: Lysozyme C (148 aa).

The signal sequence occupies residues 1-18; the sequence is MKAVIILGLVLLSVTVQG. Positions 19-148 constitute a C-type lysozyme domain; it reads KIFERCELAR…VSQYVQGCGV (130 aa). Cystine bridges form between Cys-24/Cys-146, Cys-48/Cys-134, Cys-83/Cys-99, and Cys-95/Cys-113. Active-site residues include Glu-53 and Asp-71.

Belongs to the glycosyl hydrolase 22 family. In terms of assembly, monomer.

Its subcellular location is the secreted. The catalysed reaction is Hydrolysis of (1-&gt;4)-beta-linkages between N-acetylmuramic acid and N-acetyl-D-glucosamine residues in a peptidoglycan and between N-acetyl-D-glucosamine residues in chitodextrins.. Lysozymes have primarily a bacteriolytic function; those in tissues and body fluids are associated with the monocyte-macrophage system and enhance the activity of immunoagents. The protein is Lysozyme C (LYZ) of Miopithecus talapoin (Angolan talapoin).